The sequence spans 229 residues: Demethylmenaquinone methyltransferase (229 aa).

Residues T57, D77, and D101–V102 each bind S-adenosyl-L-methionine.

The protein belongs to the class I-like SAM-binding methyltransferase superfamily. MenG/UbiE family.

It catalyses the reaction a 2-demethylmenaquinol + S-adenosyl-L-methionine = a menaquinol + S-adenosyl-L-homocysteine + H(+). The protein operates within quinol/quinone metabolism; menaquinone biosynthesis; menaquinol from 1,4-dihydroxy-2-naphthoate: step 2/2. In terms of biological role, methyltransferase required for the conversion of demethylmenaquinol (DMKH2) to menaquinol (MKH2). The sequence is that of Demethylmenaquinone methyltransferase from Chlamydia muridarum (strain MoPn / Nigg).